The chain runs to 622 residues: MSDIIRLLPDSVANQIAAGEVIQRPASVIKELVENAIDAGAQHVDVLVVDAGKTSIQVIDDGKGMSETDARLSFERHATSKIREAADLFALHTMGFRGEALASIAAVAQVELRTRMEGEELGTMLTISGSKVEGQEAVSCPKGSSFSVKNLFFNVPARRKFLKSNQTELSNILTEFERIVLVNPEVSFTLHHNGAELFNLPALQLRQRIMGVFGKKINQELLSLDVDTTMVRVSGFVGKPETARKKGARQYFFVNGRYMRHPYFHKAIMDAYEQLVPVGEQVSYFIYFEVDPANIDVNIHPTKTEIKFENEQAIWQILAAAVKETLGKFNAVPSIDFDTEGMPDIPAFDASPYTGIQPPKTTYNPDYNPFNVSAAPPSSYSKPSKDWEQLYAGLERHASSQNFHPDENDYRAEEASPAEENPGLYDHVEDSSVSEKSGQHYQFKGRFILTSVKSGLMIIDQQRAHIRILYDKYIDQISRRQGVSQGMLFPDIVQFPLSEVAILQEIMEDLSFLGFELTDLGGGSYAINGVPAGIEGLNPIDLIQNMVHTAMEKGGKVKEEVQSILALTLAKAAAIVPGQVLTNEEMTGLVDGLFAVATPNYTPDGKTVLSVINEDDLEKLFK.

A compositionally biased stretch (basic and acidic residues) spans 399 to 414 (SSQNFHPDENDYRAEE). A disordered region spans residues 399-422 (SSQNFHPDENDYRAEEASPAEENP).

It belongs to the DNA mismatch repair MutL/HexB family.

This protein is involved in the repair of mismatches in DNA. It is required for dam-dependent methyl-directed DNA mismatch repair. May act as a 'molecular matchmaker', a protein that promotes the formation of a stable complex between two or more DNA-binding proteins in an ATP-dependent manner without itself being part of a final effector complex. The sequence is that of DNA mismatch repair protein MutL from Phocaeicola vulgatus (strain ATCC 8482 / DSM 1447 / JCM 5826 / CCUG 4940 / NBRC 14291 / NCTC 11154) (Bacteroides vulgatus).